Here is a 343-residue protein sequence, read N- to C-terminus: Ribosomal RNA small subunit methyltransferase C (343 aa).

Belongs to the methyltransferase superfamily. RsmC family. Monomer.

It is found in the cytoplasm. The catalysed reaction is guanosine(1207) in 16S rRNA + S-adenosyl-L-methionine = N(2)-methylguanosine(1207) in 16S rRNA + S-adenosyl-L-homocysteine + H(+). Its function is as follows. Specifically methylates the guanine in position 1207 of 16S rRNA in the 30S particle. This chain is Ribosomal RNA small subunit methyltransferase C, found in Pseudoalteromonas atlantica (strain T6c / ATCC BAA-1087).